Here is a 116-residue protein sequence, read N- to C-terminus: NADH-ubiquinone oxidoreductase chain 3 (116 aa).

Helical transmembrane passes span 4 to 24 (IIFLFSITIAVAVVLGLAAHA), 56 to 76 (FFLVAILFLLFDLEIALLFPL), and 88 to 108 (LIPISMVFMVILTLGLVFEWI).

This sequence belongs to the complex I subunit 3 family.

It is found in the mitochondrion membrane. It carries out the reaction a ubiquinone + NADH + 5 H(+)(in) = a ubiquinol + NAD(+) + 4 H(+)(out). Core subunit of the mitochondrial membrane respiratory chain NADH dehydrogenase (Complex I) that is believed to belong to the minimal assembly required for catalysis. Complex I functions in the transfer of electrons from NADH to the respiratory chain. The immediate electron acceptor for the enzyme is believed to be ubiquinone. The chain is NADH-ubiquinone oxidoreductase chain 3 (ND3) from Strongylocentrotus purpuratus (Purple sea urchin).